The following is an 86-amino-acid chain: MKILFVIVLAAFFIGVHCKHGYPVQYSGREKGCKIACVINNASCDGECKRRGGRAGYCYFWKLACFCEYLPNNSPTWDYKTGKCRV.

Residues Met-1–Cys-18 form the signal peptide. An LCN-type CS-alpha/beta domain is found at Lys-19–Arg-85. 4 cysteine pairs are disulfide-bonded: Cys-33/Cys-84, Cys-37/Cys-58, Cys-44/Cys-65, and Cys-48/Cys-67.

It belongs to the long (4 C-C) scorpion toxin superfamily. Sodium channel inhibitor family. Beta subfamily. As to expression, expressed by the venom gland.

Its subcellular location is the secreted. Functionally, binds voltage-independently at site-4 of sodium channels (Nav) and shift the voltage of activation toward more negative potentials thereby affecting sodium channel activation and promoting spontaneous and repetitive firing. In Lychas mucronatus (Chinese swimming scorpion), this protein is Neurotoxin LmNaTx17.